The following is a 338-amino-acid chain: Lipoate-protein ligase A (338 aa).

In terms of domain architecture, BPL/LPL catalytic spans 29 to 216 (PATQRVLFLW…AFFAHYGERV (188 aa)). ATP is bound by residues Arg-71, 76–79 (GAVF), and Lys-134. A (R)-lipoate-binding site is contributed by Lys-134.

This sequence belongs to the LplA family. As to quaternary structure, monomer.

The protein localises to the cytoplasm. It carries out the reaction L-lysyl-[lipoyl-carrier protein] + (R)-lipoate + ATP = N(6)-[(R)-lipoyl]-L-lysyl-[lipoyl-carrier protein] + AMP + diphosphate + H(+). Its pathway is protein modification; protein lipoylation via exogenous pathway; protein N(6)-(lipoyl)lysine from lipoate: step 1/2. The protein operates within protein modification; protein lipoylation via exogenous pathway; protein N(6)-(lipoyl)lysine from lipoate: step 2/2. Functionally, catalyzes both the ATP-dependent activation of exogenously supplied lipoate to lipoyl-AMP and the transfer of the activated lipoyl onto the lipoyl domains of lipoate-dependent enzymes. The polypeptide is Lipoate-protein ligase A (Shigella boydii serotype 18 (strain CDC 3083-94 / BS512)).